Reading from the N-terminus, the 142-residue chain is Large ribosomal subunit protein uL11 (142 aa).

It belongs to the universal ribosomal protein uL11 family. In terms of assembly, part of the ribosomal stalk of the 50S ribosomal subunit. Interacts with L10 and the large rRNA to form the base of the stalk. L10 forms an elongated spine to which L12 dimers bind in a sequential fashion forming a multimeric L10(L12)X complex. One or more lysine residues are methylated.

In terms of biological role, forms part of the ribosomal stalk which helps the ribosome interact with GTP-bound translation factors. In Shewanella sp. (strain ANA-3), this protein is Large ribosomal subunit protein uL11.